A 391-amino-acid polypeptide reads, in one-letter code: MNHSNLANPTVSLTVTLIPKHPIRHLTSPIPNRNFTNPKLLFPLRLNETPSSSLAAKRVFIVRATVDGDGKTGNWVNRLPIPGLGAENVFRLISSATGSPIGQFISSPVTFLHSVDPRIKLVWLLTLVVLPARANLVVRLGLVLCTALLSILVLPRQVWIDQLARVSLLSGILFITLGLGSDGAPPMLQSRTPPSSITSLPNLPMSLSGYSYMLLKLGPLQFTRKGLSVGSTAACLTFIIFQSASICLATTTPEQLALALRWFLFPLTYIGVPVSEIILTLLLSLRFINLVFDEVRSVSLGIVSRRVNWQQLTVLETLDIFASFIRRIFKNIFRHAEQISQAMIVRGFRGESSSHKIYFFSGSSNKFADFASVLCLIGVISTALLSEYFLV.

The N-terminal 63 residues, 1 to 63, are a transit peptide targeting the chloroplast; it reads MNHSNLANPT…LAAKRVFIVR (63 aa). The next 5 membrane-spanning stretches (helical) occupy residues 134–154, 168–188, 229–249, 263–283, and 370–390; these read ANLV…ILVL, LLSG…PPML, VGST…ICLA, FLFP…TLLL, and FASV…EYFL.

It is found in the plastid. It localises to the chloroplast. Its subcellular location is the membrane. The polypeptide is Protein ABCI12, chloroplastic (ABCI12) (Arabidopsis thaliana (Mouse-ear cress)).